A 513-amino-acid chain; its full sequence is Na(+)/H(+) antiporter NhaB (513 aa).

12 helical membrane passes run 23-43 (LALIIFLIVNPLIFLISPFVA), 52-72 (IFTLAMALKCYPLLPGGLLAI), 97-117 (LLLMFMVAGIYFMKQLLLFIF), 120-140 (LLLSIRSKMLLSLSFCVAAAF), 144-164 (FLDALTVVAVVISVAVGFYGI), 202-222 (LMMHAGVGTALGGVMTMVGEP), 238-258 (FFLRMSPVTVPVLICGLLTCL), 303-323 (AIIGVWLVTALALHLAEVGLI), 348-368 (TESLPFTALLTVFFSVVAVII), 391-411 (LFYIFNGLLSSISDNVFVGTI), 447-467 (ATPNGQAAFLFLLTSALAPLI), and 475-495 (VWMALPYTLVLTLVGLLCVEF).

Belongs to the NhaB Na(+)/H(+) (TC 2.A.34) antiporter family.

The protein localises to the cell inner membrane. The enzyme catalyses 2 Na(+)(in) + 3 H(+)(out) = 2 Na(+)(out) + 3 H(+)(in). In terms of biological role, na(+)/H(+) antiporter that extrudes sodium in exchange for external protons. This is Na(+)/H(+) antiporter NhaB from Escherichia coli O45:K1 (strain S88 / ExPEC).